A 571-amino-acid chain; its full sequence is Urease subunit alpha (571 aa).

The Urease domain occupies 131–571 (GGIDAHIHFI…LPMAQRYFLF (441 aa)). Ni(2+) is bound by residues H136, H138, and K219. The residue at position 219 (K219) is an N6-carboxylysine. H221 contributes to the substrate binding site. The Ni(2+) site is built by H248 and H274. H322 functions as the Proton donor in the catalytic mechanism. Residue D362 participates in Ni(2+) binding.

This sequence belongs to the metallo-dependent hydrolases superfamily. Urease alpha subunit family. Heterotrimer of UreA (gamma), UreB (beta) and UreC (alpha) subunits. Three heterotrimers associate to form the active enzyme. The cofactor is Ni cation. Post-translationally, carboxylation allows a single lysine to coordinate two nickel ions.

It is found in the cytoplasm. The catalysed reaction is urea + 2 H2O + H(+) = hydrogencarbonate + 2 NH4(+). It functions in the pathway nitrogen metabolism; urea degradation; CO(2) and NH(3) from urea (urease route): step 1/1. The sequence is that of Urease subunit alpha from Nostoc punctiforme (strain ATCC 29133 / PCC 73102).